A 294-amino-acid polypeptide reads, in one-letter code: ATP phosphoribosyltransferase (294 aa).

It belongs to the ATP phosphoribosyltransferase family. Long subfamily. Mg(2+) is required as a cofactor.

It is found in the cytoplasm. The catalysed reaction is 1-(5-phospho-beta-D-ribosyl)-ATP + diphosphate = 5-phospho-alpha-D-ribose 1-diphosphate + ATP. It participates in amino-acid biosynthesis; L-histidine biosynthesis; L-histidine from 5-phospho-alpha-D-ribose 1-diphosphate: step 1/9. Feedback inhibited by histidine. In terms of biological role, catalyzes the condensation of ATP and 5-phosphoribose 1-diphosphate to form N'-(5'-phosphoribosyl)-ATP (PR-ATP). Has a crucial role in the pathway because the rate of histidine biosynthesis seems to be controlled primarily by regulation of HisG enzymatic activity. This chain is ATP phosphoribosyltransferase, found in Prosthecochloris aestuarii (strain DSM 271 / SK 413).